The primary structure comprises 213 residues: Ferric nitrobindin-like protein (213 aa).

A disordered region spans residues 17–42; it reads VNLAAEQSKSTSDKNLPEFGDMPIPD. The GXWXGXG signature appears at 65-71; it reads GVWRGQG.

Belongs to the nitrobindin family.

The protein is Ferric nitrobindin-like protein of Corynebacterium jeikeium (strain K411).